We begin with the raw amino-acid sequence, 514 residues long: MGCDGRVSGLLRRNLQPTLTYWSVFFSFGLCIAFLGPTLLDLRCQTHSSLPQISWVFLSQQLCLLLGSALGGVFKRTLAQSLWALFTSSLAISLVFAVIPFCRDVKVLALVMALAGLAMGCIDTVANMQLVRMYQKDSAVFLQVLHFFVGFGALLSPLIADPFLSEANCLPANSTANTTSRGHLFHVSRVLGQHHVDAKPWSNQTLPGLTPKDGSGTRVSYAFWIMALINLPVPMAVLMLLSKERLPTCCPQRRPLLLSADELALETQPPEKEDASSLPPKFQSHPGHEDLFSCCQRKNLRGAPYSFFAIHITAALVLFMTDGLTGAYSAFVYSYAVEKPLSVGHKVAGYLPSLFWGFITLGRLLSIPISSRMKPATMVFINVVGVVVTFLVLLIFSYNVVFLFVGTASLGLFLSSTFPSMLAYTEDSLQYKGCATTVLVTGAGVGEMVLQMLVGSIFQAQGSYSFLVCGVIFGCLAFTFYILLLFFHRMHPGLPSVPTQDRSIGMENSESYQR.

Helical transmembrane passes span 19 to 39, 53 to 73, 82 to 102, 107 to 127, and 139 to 159; these read LTYW…GPTL, ISWV…LGGV, LWAL…IPFC, VLAL…TVAN, and AVFL…SPLI. 2 N-linked (GlcNAc...) asparagine glycosylation sites follow: N177 and N203. The next 7 helical transmembrane spans lie at 221–241, 307–327, 347–367, 376–396, 400–420, 438–458, and 466–486; these read YAFW…LMLL, FFAI…LTGA, VAGY…LLSI, ATMV…LLIF, VVFL…TFPS, VLVT…GSIF, and FLVC…LLLF.

The protein belongs to the major facilitator superfamily.

Its subcellular location is the membrane. The polypeptide is Major facilitator superfamily domain-containing protein 4A (MFSD4A) (Pongo abelii (Sumatran orangutan)).